A 1271-amino-acid polypeptide reads, in one-letter code: Chitin synthase 4 (1271 aa).

Disordered regions lie at residues 1–45 (MPPT…SFDH) and 58–117 (PNHP…ERPS). Over residues 21–30 (APDTQESSPA) the composition is skewed to polar residues. A run of 2 helical transmembrane segments spans residues 165–185 (WWIRITWMMTWWIPSFLLVHL) and 201–221 (LAIFMMICLACAVVLFYIIFF). N407 carries N-linked (GlcNAc...) asparagine glycosylation. The chain crosses the membrane as a helical span at residues 473–493 (LLLAFSIILIATIASKFLAAL). Residues N713 and N836 are each glycosylated (N-linked (GlcNAc...) asparagine). Transmembrane regions (helical) follow at residues 867-887 (LLGTIILPATCGYLIYLVIVV), 894-914 (IPVISLAMIGATYGLQALIFI), and 919-939 (FMLIGWMLVYILAFPVWSVFL). The disordered stretch occupies residues 999–1081 (HSESPAPSEK…DKSFIRGSKP (83 aa)). A compositionally biased stretch (polar residues) spans 1027–1037 (RSPSFHSSASE). 2 N-linked (GlcNAc...) asparagine glycosylation sites follow: N1055 and N1161. The region spanning 1213 to 1269 (EVQDEEVLDKLKTWLSKQDLMSVTKRQTREAIYTLFPNAGLQNRAGWLNEQIDKILS) is the DEK-C domain.

Belongs to the chitin synthase family.

It is found in the cell membrane. The catalysed reaction is [(1-&gt;4)-N-acetyl-beta-D-glucosaminyl](n) + UDP-N-acetyl-alpha-D-glucosamine = [(1-&gt;4)-N-acetyl-beta-D-glucosaminyl](n+1) + UDP + H(+). Functionally, polymerizes chitin, a structural polymer of the cell wall and septum, by transferring the sugar moiety of UDP-GlcNAc to the non-reducing end of the growing chitin polymer. Produces a large proportion of the chitin that is not deacetylated to chitosan. The sequence is that of Chitin synthase 4 from Cryptococcus neoformans var. grubii serotype A (strain H99 / ATCC 208821 / CBS 10515 / FGSC 9487) (Filobasidiella neoformans var. grubii).